The chain runs to 299 residues: Oxygen-dependent coproporphyrinogen-III oxidase (299 aa).

Residue serine 92 participates in substrate binding. Histidine 96 and histidine 106 together coordinate a divalent metal cation. The Proton donor role is filled by histidine 106. 108 to 110 provides a ligand contact to substrate; that stretch reads NVR. Residues histidine 145 and histidine 175 each coordinate a divalent metal cation. The interval 240–275 is important for dimerization; sequence YVEFNLVWDRGTLFGLQTGGRTESILMSMPPLVRWE. 258–260 contacts substrate; sequence GGR.

It belongs to the aerobic coproporphyrinogen-III oxidase family. Homodimer. Requires a divalent metal cation as cofactor.

The protein localises to the cytoplasm. The catalysed reaction is coproporphyrinogen III + O2 + 2 H(+) = protoporphyrinogen IX + 2 CO2 + 2 H2O. Its pathway is porphyrin-containing compound metabolism; protoporphyrin-IX biosynthesis; protoporphyrinogen-IX from coproporphyrinogen-III (O2 route): step 1/1. Functionally, involved in the heme biosynthesis. Catalyzes the aerobic oxidative decarboxylation of propionate groups of rings A and B of coproporphyrinogen-III to yield the vinyl groups in protoporphyrinogen-IX. This is Oxygen-dependent coproporphyrinogen-III oxidase from Salmonella typhi.